Reading from the N-terminus, the 295-residue chain is Indole-3-glycerol phosphate synthase (295 aa).

The protein belongs to the TrpC family.

It carries out the reaction 1-(2-carboxyphenylamino)-1-deoxy-D-ribulose 5-phosphate + H(+) = (1S,2R)-1-C-(indol-3-yl)glycerol 3-phosphate + CO2 + H2O. Its pathway is amino-acid biosynthesis; L-tryptophan biosynthesis; L-tryptophan from chorismate: step 4/5. This Prochlorococcus marinus (strain MIT 9215) protein is Indole-3-glycerol phosphate synthase.